Consider the following 954-residue polypeptide: Glucosidase 2 subunit alpha (954 aa).

The N-terminal stretch at 1-22 (MVLLKWLVCQLVFFTAFSHAFT) is a signal peptide. N-linked (GlcNAc...) asparagine glycans are attached at residues asparagine 114, asparagine 126, asparagine 142, asparagine 173, and asparagine 345. The active-site Nucleophile is aspartate 537. Glutamate 540 is a catalytic residue. Aspartate 614 serves as the catalytic Proton donor. N-linked (GlcNAc...) asparagine glycosylation is found at asparagine 783, asparagine 791, asparagine 867, asparagine 880, asparagine 907, and asparagine 941.

It belongs to the glycosyl hydrolase 31 family. As to quaternary structure, heterodimer of a catalytic subunit alpha (ROT2) and a subunit beta (GTB1).

The protein resides in the endoplasmic reticulum. The enzyme catalyses N(4)-(alpha-D-Glc-(1-&gt;3)-alpha-D-Man-(1-&gt;2)-alpha-D-Man-(1-&gt;2)-alpha-D-Man-(1-&gt;3)-[alpha-D-Man-(1-&gt;2)-alpha-D-Man-(1-&gt;3)-[alpha-D-Man-(1-&gt;2)-alpha-D-Man-(1-&gt;6)]-alpha-D-Man-(1-&gt;6)]-beta-D-Man-(1-&gt;4)-beta-D-GlcNAc-(1-&gt;4)-beta-D-GlcNAc)-L-asparaginyl-[protein] + H2O = N(4)-(alpha-D-Man-(1-&gt;2)-alpha-D-Man-(1-&gt;2)-alpha-D-Man-(1-&gt;3)-[alpha-D-Man-(1-&gt;2)-alpha-D-Man-(1-&gt;3)-[alpha-D-Man-(1-&gt;2)-alpha-D-Man-(1-&gt;6)]-alpha-D-Man-(1-&gt;6)]-beta-D-Man-(1-&gt;4)-beta-D-GlcNAc-(1-&gt;4)-beta-D-GlcNAc)-L-asparaginyl-[protein] (N-glucan mannose isomer 9A1,2,3B1,2,3) + beta-D-glucose. The catalysed reaction is N(4)-(alpha-D-Glc-(1-&gt;3)-alpha-D-Glc-(1-&gt;3)-alpha-D-Man-(1-&gt;2)-alpha-D-Man-(1-&gt;2)-alpha-D-Man-(1-&gt;3)-[alpha-D-Man-(1-&gt;2)-alpha-D-Man-(1-&gt;3)-[alpha-D-Man-(1-&gt;2)-alpha-D-Man-(1-&gt;6)]-alpha-D-Man-(1-&gt;6)]-beta-D-Man-(1-&gt;4)-beta-D-GlcNAc-(1-&gt;4)-beta-D-GlcNAc)-L-asparaginyl-[protein] + H2O = N(4)-(alpha-D-Glc-(1-&gt;3)-alpha-D-Man-(1-&gt;2)-alpha-D-Man-(1-&gt;2)-alpha-D-Man-(1-&gt;3)-[alpha-D-Man-(1-&gt;2)-alpha-D-Man-(1-&gt;3)-[alpha-D-Man-(1-&gt;2)-alpha-D-Man-(1-&gt;6)]-alpha-D-Man-(1-&gt;6)]-beta-D-Man-(1-&gt;4)-beta-D-GlcNAc-(1-&gt;4)-beta-D-GlcNAc)-L-asparaginyl-[protein] + beta-D-glucose. Its pathway is glycan metabolism; N-glycan metabolism. Its activity is regulated as follows. Inhibited by glucose, maltose and nigerose, and by the antibiotic deoxynojirimycin. Catalytic subunit of glucosidase 2, which cleaves sequentially the 2 innermost alpha-1,3-linked glucose residues from the Glc(2)Man(9)GlcNAc(2) oligosaccharide precursor of immature glycoproteins. In Saccharomyces cerevisiae (strain ATCC 204508 / S288c) (Baker's yeast), this protein is Glucosidase 2 subunit alpha (ROT2).